The sequence spans 338 residues: MNCLYQRDCLRLLDFTTAELKHIITLSEKLKKTKQNRQEIKLLKQKNIALIFEKESTRTRCSFEVAAFDQGANVTYLGPGSTHLGTKESIEDTARVLSRLYDGIQYRGHNHKTIEILAQYSTVPVWNGLTEKFHPTQLIADLLTIKEIFPNRNFSDIKCAYVGDSRNNIGNSLLEAASIVGLNLYLVSPKQYWPEKNLFIECKKIIKKNQGNIICTENISEGVKNADFIYTDVWVSMGEHHKIWKERIELLKNYQVNDSMIKMTNNSKVKILHCLPALHDQKTSIGKSILKKYGLKDGMEITDNIFQKHQKTIFEQAENRLHTIKALLVSSLIKEMNF.

Residues 56 to 59 (STRT), Arg107, and 134 to 137 (HPTQ) each bind carbamoyl phosphate. Residues Asn168, Asp232, and 236 to 237 (SM) contribute to the L-ornithine site. Carbamoyl phosphate-binding positions include 274–275 (CL) and Arg320.

This sequence belongs to the aspartate/ornithine carbamoyltransferase superfamily. OTCase family.

Its subcellular location is the cytoplasm. The enzyme catalyses carbamoyl phosphate + L-ornithine = L-citrulline + phosphate + H(+). It participates in amino-acid biosynthesis; L-arginine biosynthesis; L-arginine from L-ornithine and carbamoyl phosphate: step 1/3. In terms of biological role, reversibly catalyzes the transfer of the carbamoyl group from carbamoyl phosphate (CP) to the N(epsilon) atom of ornithine (ORN) to produce L-citrulline. In Buchnera aphidicola subsp. Schizaphis graminum (strain Sg), this protein is Ornithine carbamoyltransferase (argI).